The primary structure comprises 260 residues: 3'-5' ssDNA/RNA exonuclease TatD (260 aa).

Residues Glu-91, His-127, and His-152 each coordinate a divalent metal cation.

This sequence belongs to the metallo-dependent hydrolases superfamily. TatD-type hydrolase family. TatD subfamily. As to quaternary structure, monomer. Mg(2+) is required as a cofactor.

It is found in the cytoplasm. Its function is as follows. 3'-5' exonuclease that prefers single-stranded DNA and RNA. May play a role in the H(2)O(2)-induced DNA damage repair. This is 3'-5' ssDNA/RNA exonuclease TatD from Salmonella typhimurium (strain LT2 / SGSC1412 / ATCC 700720).